Reading from the N-terminus, the 57-residue chain is Small ribosomal subunit protein bS21 (57 aa).

It belongs to the bacterial ribosomal protein bS21 family.

In Geobacillus kaustophilus (strain HTA426), this protein is Small ribosomal subunit protein bS21.